A 502-amino-acid polypeptide reads, in one-letter code: Glycerol kinase (502 aa).

Thr14 contributes to the ADP binding site. Positions 14, 15, and 16 each coordinate ATP. Thr14 is a sn-glycerol 3-phosphate binding site. Arg18 serves as a coordination point for ADP. Sn-glycerol 3-phosphate is bound by residues Arg84, Glu85, Tyr136, and Asp246. Glycerol contacts are provided by Arg84, Glu85, Tyr136, Asp246, and Gln247. Thr268 and Gly311 together coordinate ADP. ATP-binding residues include Thr268, Gly311, Gln315, and Gly412. Gly412 and Asn416 together coordinate ADP.

This sequence belongs to the FGGY kinase family. Homotetramer and homodimer (in equilibrium). Heterodimer with EIIA-Glc. Binds 1 zinc ion per glycerol kinase EIIA-Glc dimer. The zinc ion is important for dimerization.

The enzyme catalyses glycerol + ATP = sn-glycerol 3-phosphate + ADP + H(+). It functions in the pathway polyol metabolism; glycerol degradation via glycerol kinase pathway; sn-glycerol 3-phosphate from glycerol: step 1/1. Activity of this regulatory enzyme is affected by several metabolites. Allosterically and non-competitively inhibited by fructose 1,6-bisphosphate (FBP) and unphosphorylated phosphocarrier protein EIIA-Glc (III-Glc), an integral component of the bacterial phosphotransferase (PTS) system. Key enzyme in the regulation of glycerol uptake and metabolism. Catalyzes the phosphorylation of glycerol to yield sn-glycerol 3-phosphate. The polypeptide is Glycerol kinase (Enterobacter sp. (strain 638)).